Here is a 352-residue protein sequence, read N- to C-terminus: Uroporphyrinogen decarboxylase (352 aa).

Residues 26 to 30 (RQAGR), aspartate 76, tyrosine 153, serine 208, and histidine 323 contribute to the substrate site.

Belongs to the uroporphyrinogen decarboxylase family. In terms of assembly, homodimer.

It is found in the cytoplasm. The catalysed reaction is uroporphyrinogen III + 4 H(+) = coproporphyrinogen III + 4 CO2. Its pathway is porphyrin-containing compound metabolism; protoporphyrin-IX biosynthesis; coproporphyrinogen-III from 5-aminolevulinate: step 4/4. Catalyzes the decarboxylation of four acetate groups of uroporphyrinogen-III to yield coproporphyrinogen-III. This is Uroporphyrinogen decarboxylase from Prochlorococcus marinus (strain NATL2A).